The primary structure comprises 120 residues: Large ribosomal subunit protein eL34 (120 aa).

Belongs to the eukaryotic ribosomal protein eL34 family.

This chain is Large ribosomal subunit protein eL34 (RPL34), found in Pisum sativum (Garden pea).